A 1851-amino-acid polypeptide reads, in one-letter code: Voltage-dependent calcium channel type A subunit alpha-1 (1851 aa).

Topologically, residues 1–38 (MGGPKKEENPPGGGPTSLFILTEDNPIRKYTRFIIEWP) are cytoplasmic. Residues 25-316 (NPIRKYTRFI…LVLGVLSGEF (292 aa)) form an I repeat. The chain crosses the membrane as a helical span at residues 39-57 (PFEYAVLLTIIANCVVLAL). The Extracellular segment spans residues 58–75 (EEHLPGGDKTVLAQKLEK). The helical transmembrane segment at 76-95 (TEAYFLCIFCVEASLKILAL) threads the bilayer. The Cytoplasmic portion of the chain corresponds to 96 to 107 (GLVLHKHSYLRN). The chain crosses the membrane as a helical span at residues 108–128 (IWNIMDFFVVVTGFMTQYPQI). Over 129–133 (GPEVD) the chain is Extracellular. The helical transmembrane segment at 134-152 (LRTLRAIRVLRPLKLVSGI) threads the bilayer. Topologically, residues 153-171 (PSLQVVLKSIIKAMAPLLQ) are cytoplasmic. Residues 172–191 (IGLLVLFAIVIFAIIGLEFY) traverse the membrane as a helical segment. The Extracellular portion of the chain corresponds to 192–288 (SGALHKTCYS…WTNDALGSAF (97 aa)). N-linked (GlcNAc...) asparagine glycans are attached at residues N234 and N235. A helical transmembrane segment spans residues 289-313 (NWIYFVPLIVIGSFFMLNLVLGVLS). The Cytoplasmic portion of the chain corresponds to 314–441 (GEFSNERNRV…FWIRHTVKTQ (128 aa)). Positions 381-417 (RKKLKSLGKSKSTDTEEEEAEEDYGDDGYLKTRSKPQ) are disordered. The segment covering 395–406 (TEEEEAEEDYGD) has biased composition (acidic residues). The stretch at 427–670 (EKRFRFWIRH…VFLAIAVDNL (244 aa)) is one II repeat. The helical transmembrane segment at 442 to 460 (WFYWFVIVLVFLNTVCVAV) threads the bilayer. Topologically, residues 461 to 475 (EHYGQPSFLTEFLYY) are extracellular. A helical transmembrane segment spans residues 476-495 (AEFIFLGLFMSEMFIKMYAL). Topologically, residues 496–503 (GPRIYFES) are cytoplasmic. The helical transmembrane segment at 504–522 (SFNRFDCVVISGSIFEVIW) threads the bilayer. At 523–531 (SEVKGGSFG) the chain is on the extracellular side. A helical membrane pass occupies residues 532–550 (LSVLRALRLLRIFKVTKYW). Residues 551-569 (SSLRNLVISLLNSMRSIIS) are Cytoplasmic-facing. A helical transmembrane segment spans residues 570–589 (LLFLLFLFILIFALLGMQLF). Residues 590 to 642 (GGQFNLPGGTPETNFNTFPIALLTVFQILTGEDWNEVMYQGIISQGGAQKGMI) lie on the Extracellular side of the membrane. The chain crosses the membrane as a helical span at residues 643–667 (YSIYFIVLVLFGNYTLLNVFLAIAV). Residues 668–767 (DNLANAQELT…IRRGAHWVVN (100 aa)) lie on the Cytoplasmic side of the membrane. The disordered stretch occupies residues 710 to 741 (ENGDGAVAPSKSKGKKKEEEKKEEEEVTEGPK). An III repeat occupies 762–1049 (AHWVVNLPYF…IITFQEQGEA (288 aa)). A helical transmembrane segment spans residues 768–786 (LPYFDFFIMVVISMSSIAL). At 787–802 (AAEDPVRENSRRNKIL) the chain is on the extracellular side. Residues 803–822 (NYFDYAFTGVFTIEMLLKIV) form a helical membrane-spanning segment. Over 823–834 (DLGVILHPGSYL) the chain is Cytoplasmic. A helical transmembrane segment spans residues 835–853 (REFWNIMDAVVVICAAVSF). Topologically, residues 854-866 (GFDMSGSSAGQNL) are extracellular. A glycan (N-linked (GlcNAc...) asparagine) is linked at N865. Residues 867–885 (STIKSLRVLRVLRPLKTIK) form a helical membrane-spanning segment. The Cytoplasmic segment spans residues 886–904 (RVPKLKAVFDCVVNSLKNV). Residues 905-924 (VNILIVYILFQFIFSVIGVQ) form a helical membrane-spanning segment. Residues 925 to 1013 (LFNGKFFYCT…EDRGPIQNFR (89 aa)) are Extracellular-facing. The chain crosses the membrane as a helical span at residues 1014-1038 (IEMSIFYIVYFIVFPFFFVNIFVAL). The Cytoplasmic segment spans residues 1039–1093 (IIITFQEQGEAELQDGEIDKNQKSCIDFTIGARPLERYMPKNRNTFKYKVWRIVV). An IV repeat occupies 1086–1347 (YKVWRIVVST…DNFDYLTRDS (262 aa)). The chain crosses the membrane as a helical span at residues 1094-1122 (STPFEYFIMMLIVFNTLLLMMKYHNQGDM). Over 1123-1127 (YEKSL) the chain is Extracellular. Residues 1128–1147 (KYINMGFTGMFSVETVLKII) traverse the membrane as a helical segment. Residues 1148–1155 (GFGVKNFF) lie on the Cytoplasmic side of the membrane. The chain crosses the membrane as a helical span at residues 1156-1174 (KDPWNIFDLITVLGSIVDA). Residues 1175–1184 (LWMEFGHDDS) lie on the Extracellular side of the membrane. A helical membrane pass occupies residues 1185 to 1203 (NSINVGFLRLFRAARLIKL). Residues 1204 to 1222 (LRQGYTIRILLWTFVQSFK) lie on the Cytoplasmic side of the membrane. Residues 1223 to 1242 (ALPYVCLLIAMLFFIYAIIG) form a helical membrane-spanning segment. Over 1243–1308 (MQVFGNIKLG…DAEKAPGEYC (66 aa)) the chain is Extracellular. The segment at 1306–1348 (EYCGSTLAYAYFVSFIFFCSFLMLNLFVAVIMDNFDYLTRDSS) is phenylalkylamine binding. A helical membrane pass occupies residues 1309–1333 (GSTLAYAYFVSFIFFCSFLMLNLFV). Over 1334–1851 (AVIMDNFDYL…HSDSDEEDWC (518 aa)) the chain is Cytoplasmic. An EF-hand domain is found at 1353 to 1388 (HHLDEFVRIWAEYDPNATGKIHYTEMYDMLKNMDPP). Residues D1366, N1368, T1370, K1372, and E1377 each coordinate Ca(2+). 4 disordered regions span residues 1513–1572 (DASR…HHDI), 1588–1653 (TRHP…SPAR), 1685–1764 (RAGI…DRDR), and 1823–1851 (VLPS…EDWC). Basic residues predominate over residues 1589–1600 (RHPRHGNSHPRY). Residues 1604-1619 (SWSASTSPARSPSPSR) are compositionally biased toward low complexity. Composition is skewed to polar residues over residues 1637 to 1649 (YGTT…SRSP) and 1698 to 1710 (KPST…TNIN). Positions 1734-1764 (HHRDLLRDPRDMYYSSRERERDRERLRDRDR) are enriched in basic and acidic residues.

The protein belongs to the calcium channel alpha-1 subunit (TC 1.A.1.11) family. In terms of tissue distribution, expressed widely in the embryonic nervous system.

The protein localises to the membrane. In terms of biological role, voltage-sensitive calcium channels (VSCC) mediate the entry of calcium ions into excitable cells and are also involved in a variety of calcium-dependent processes, including muscle contraction, neurotransmitter release, gene expression, cell motility, cell division and cell death. Probably encodes a dihydropyridine-insensitive current. Vital for survival to adulthood. In Drosophila melanogaster (Fruit fly), this protein is Voltage-dependent calcium channel type A subunit alpha-1 (cac).